We begin with the raw amino-acid sequence, 201 residues long: Peroxiredoxin 2 (201 aa).

A Thioredoxin domain is found at 3-156 (VYLGKRAPDF…ILRSVKALQA (154 aa)). Residue cysteine 44 is the Cysteine sulfenic acid (-SOH) intermediate of the active site. Position 119 (arginine 119) interacts with substrate.

Belongs to the peroxiredoxin family. Prx6 subfamily. In terms of assembly, homodecamer. Pentamer of dimers that assemble into a ring structure.

Its subcellular location is the cytoplasm. The enzyme catalyses a hydroperoxide + [thioredoxin]-dithiol = an alcohol + [thioredoxin]-disulfide + H2O. Its function is as follows. Thiol-specific peroxidase that catalyzes the reduction of hydrogen peroxide and organic hydroperoxides to water and alcohols, respectively. Plays a role in cell protection against oxidative stress by detoxifying peroxides. In Picrophilus torridus (strain ATCC 700027 / DSM 9790 / JCM 10055 / NBRC 100828 / KAW 2/3), this protein is Peroxiredoxin 2.